Consider the following 95-residue polypeptide: Co-chaperonin GroES (95 aa).

This sequence belongs to the GroES chaperonin family. Heptamer of 7 subunits arranged in a ring. Interacts with the chaperonin GroEL.

Its subcellular location is the cytoplasm. Functionally, together with the chaperonin GroEL, plays an essential role in assisting protein folding. The GroEL-GroES system forms a nano-cage that allows encapsulation of the non-native substrate proteins and provides a physical environment optimized to promote and accelerate protein folding. GroES binds to the apical surface of the GroEL ring, thereby capping the opening of the GroEL channel. The sequence is that of Co-chaperonin GroES from Streptococcus salivarius.